Here is a 355-residue protein sequence, read N- to C-terminus: Erythronate-4-phosphate dehydrogenase (355 aa).

The substrate site is built by Ser45 and Thr66. Residue Asp146 coordinates NAD(+). Arg206 is an active-site residue. NAD(+) is bound at residue Asp229. Glu234 is a catalytic residue. The active-site Proton donor is the His251. NAD(+) is bound at residue Gly254. Tyr255 lines the substrate pocket.

Belongs to the D-isomer specific 2-hydroxyacid dehydrogenase family. PdxB subfamily. As to quaternary structure, homodimer.

It localises to the cytoplasm. It carries out the reaction 4-phospho-D-erythronate + NAD(+) = (R)-3-hydroxy-2-oxo-4-phosphooxybutanoate + NADH + H(+). It functions in the pathway cofactor biosynthesis; pyridoxine 5'-phosphate biosynthesis; pyridoxine 5'-phosphate from D-erythrose 4-phosphate: step 2/5. Functionally, catalyzes the oxidation of erythronate-4-phosphate to 3-hydroxy-2-oxo-4-phosphonooxybutanoate. This chain is Erythronate-4-phosphate dehydrogenase, found in Acinetobacter baumannii (strain SDF).